A 380-amino-acid polypeptide reads, in one-letter code: Cytochrome b (380 aa).

Helical transmembrane passes span 33–53 (FGSLLGVCLMIQILTGLFLAM), 77–98 (WLIRYLHANGASMFFICLFIHV), 113–133 (WNIGIILLLTTMATAFVGYVL), and 178–198 (FFAFHFILPFIITALVLVHLL). Residues His83 and His97 each coordinate heme b. Positions 182 and 196 each coordinate heme b. A ubiquinone is bound at residue His201. 4 helical membrane-spanning segments follow: residues 226–246 (IKDLLGVLLLLMVLMILVLFF), 288–308 (LGGVLALILSILILAAFPLLN), 320–340 (LTQFLYWVFIANLLVLTWIGG), and 347–367 (FTTIGQISSVLYFTIILVLMP).

Belongs to the cytochrome b family. In terms of assembly, the cytochrome bc1 complex contains 11 subunits: 3 respiratory subunits (MT-CYB, CYC1 and UQCRFS1), 2 core proteins (UQCRC1 and UQCRC2) and 6 low-molecular weight proteins (UQCRH/QCR6, UQCRB/QCR7, UQCRQ/QCR8, UQCR10/QCR9, UQCR11/QCR10 and a cleavage product of UQCRFS1). This cytochrome bc1 complex then forms a dimer. The cofactor is heme b.

It localises to the mitochondrion inner membrane. Functionally, component of the ubiquinol-cytochrome c reductase complex (complex III or cytochrome b-c1 complex) that is part of the mitochondrial respiratory chain. The b-c1 complex mediates electron transfer from ubiquinol to cytochrome c. Contributes to the generation of a proton gradient across the mitochondrial membrane that is then used for ATP synthesis. In Thomasomys notatus (Distinguished oldfield mouse), this protein is Cytochrome b (MT-CYB).